A 100-amino-acid chain; its full sequence is Putative membrane protein insertion efficiency factor (100 aa).

This sequence belongs to the UPF0161 family.

The protein resides in the cell membrane. Its function is as follows. Could be involved in insertion of integral membrane proteins into the membrane. The polypeptide is Putative membrane protein insertion efficiency factor (Enterococcus faecalis (strain ATCC 700802 / V583)).